Here is a 669-residue protein sequence, read N- to C-terminus: Methionine--tRNA ligase (669 aa).

The short motif at 15–25 is the 'HIGH' region element; it reads PYANGPAHIGH. Zn(2+) contacts are provided by Cys146, Cys149, Cys158, and Cys162. Residues 328-332 carry the 'KMSKS' region motif; it reads KFSKS. Lys331 provides a ligand contact to ATP. A tRNA-binding domain is found at 570 to 669; the sequence is QFKALDLRVG…KEVPAGCGIR (100 aa).

Belongs to the class-I aminoacyl-tRNA synthetase family. MetG type 1 subfamily. As to quaternary structure, homodimer. The cofactor is Zn(2+).

The protein resides in the cytoplasm. It carries out the reaction tRNA(Met) + L-methionine + ATP = L-methionyl-tRNA(Met) + AMP + diphosphate. Is required not only for elongation of protein synthesis but also for the initiation of all mRNA translation through initiator tRNA(fMet) aminoacylation. This is Methionine--tRNA ligase from Methanothrix thermoacetophila (strain DSM 6194 / JCM 14653 / NBRC 101360 / PT) (Methanosaeta thermophila).